The sequence spans 101 residues: MEMLLFLNESYIFHRFRMWSIVLWHSCVFVCAECGNAYYRGAGGCLEKPFCAPVKFPFSVKKNIRILDLDPRSEAYCLSHHLVCPKRFPCKATSLLLIPEG.

The protein belongs to the UPF0377 family.

This Saccharomyces cerevisiae (strain ATCC 204508 / S288c) (Baker's yeast) protein is Putative UPF0377 protein YBL108W.